The following is a 518-amino-acid chain: Cell wall biosynthesis protein LcpA (518 aa).

The Cytoplasmic segment spans residues 1-31; the sequence is MTEKYRPVRDIKPAPAAMQSTKQAGHPVFRS. Residues 32–52 traverse the membrane as a helical segment; it reads VVAFVSVLVLLVSGLGYLAVG. Topologically, residues 53–518 are periplasmic; that stretch reads KVDGVASGNL…AGGDGPRCVN (466 aa). Residues 485-518 are disordered; it reads AVTSSTVGQPGADVGEPIESPEFDAGGDGPRCVN.

It belongs to the LytR/CpsA/Psr (LCP) family. Forms homodimers and homotetramers.

The protein resides in the cell inner membrane. Its function is as follows. Involved in cell wall biosynthesis. May be responsible for the transfer of arabinogalactan onto peptidoglycan. In vitro, has pyrophosphatase activity. The protein is Cell wall biosynthesis protein LcpA of Corynebacterium glutamicum (strain ATCC 13032 / DSM 20300 / JCM 1318 / BCRC 11384 / CCUG 27702 / LMG 3730 / NBRC 12168 / NCIMB 10025 / NRRL B-2784 / 534).